Consider the following 452-residue polypeptide: GATA-binding factor 2 (452 aa).

Residues 130–182 (GGSLYPGTGSSACPSSSHSSPHLFGFPPTPPKDVSPDPGPASPPSSSRLEDKD) form a disordered region. Positions 139 to 151 (SSACPSSSHSSPH) are enriched in low complexity. Over residues 156–172 (PPTPPKDVSPDPGPASP) the composition is skewed to pro residues. 2 GATA-type zinc fingers span residues 267–291 (CVNCGATATPLWRRDGTGHYLCNAC) and 321–345 (CANCQTSTTTLWRRNANGDPVCNAC). Positions 426–438 (QTPTPIHPSSSLS) are enriched in polar residues. Residues 426-452 (QTPTPIHPSSSLSFGHPHHSSMVTAMG) form a disordered region.

Expressed in the developing ventral blood island, and in the embryonic nervous system.

The protein resides in the nucleus. This chain is GATA-binding factor 2 (gata2), found in Xenopus laevis (African clawed frog).